Consider the following 162-residue polypeptide: Crossover junction endodeoxyribonuclease RuvC (162 aa).

Active-site residues include aspartate 8, glutamate 69, and histidine 141. Positions 8, 69, and 141 each coordinate Mg(2+).

It belongs to the RuvC family. As to quaternary structure, homodimer which binds Holliday junction (HJ) DNA. The HJ becomes 2-fold symmetrical on binding to RuvC with unstacked arms; it has a different conformation from HJ DNA in complex with RuvA. In the full resolvosome a probable DNA-RuvA(4)-RuvB(12)-RuvC(2) complex forms which resolves the HJ. The cofactor is Mg(2+).

The protein localises to the cytoplasm. It catalyses the reaction Endonucleolytic cleavage at a junction such as a reciprocal single-stranded crossover between two homologous DNA duplexes (Holliday junction).. Its function is as follows. The RuvA-RuvB-RuvC complex processes Holliday junction (HJ) DNA during genetic recombination and DNA repair. Endonuclease that resolves HJ intermediates. Cleaves cruciform DNA by making single-stranded nicks across the HJ at symmetrical positions within the homologous arms, yielding a 5'-phosphate and a 3'-hydroxyl group; requires a central core of homology in the junction. The consensus cleavage sequence is 5'-(A/T)TT(C/G)-3'. Cleavage occurs on the 3'-side of the TT dinucleotide at the point of strand exchange. HJ branch migration catalyzed by RuvA-RuvB allows RuvC to scan DNA until it finds its consensus sequence, where it cleaves and resolves the cruciform DNA. In Wolbachia pipientis wMel, this protein is Crossover junction endodeoxyribonuclease RuvC.